The chain runs to 262 residues: Matrix protein (262 aa).

The interval 219–243 is disordered; that stretch reads PSPAEGKIGRIKRPTERKEDTPSMT.

Belongs to the nucleorhabdovirus type-1 matrix protein family. As to quaternary structure, homomultimer. Interacts with nucleoprotein and with the cytoplasmic domain of glycoprotein.

It is found in the virion membrane. It localises to the host endomembrane system. In terms of biological role, plays a major role in assembly and budding of virion. Completely covers the ribonucleoprotein coil and keep it in condensed bullet-shaped form. Inhibits viral transcription and stimulates replication. This chain is Matrix protein (M), found in Rice yellow stunt virus (RYSV).